Consider the following 190-residue polypeptide: MATKTFSLPFLLIVCIFSQLSSTFGDPSVKDLGQHAGYFSLPRSKSARLFHFFFQSRNNSSDPVVIWLSGGPGCSSSNQRYISYLKISNLIYVDQPIRTGFSYANDSTDLRHDEDSVSNDLYDFLQAFFKEHPNLAKDDFYITGESYAGHYIPALASRVHNGNEKKEGIVINLKVTDISLVTATATWSAG.

The first 25 residues, methionine 1 to glycine 25, serve as a signal peptide directing secretion. Residues asparagine 58, asparagine 59, and asparagine 105 are each glycosylated (N-linked (GlcNAc...) asparagine).

The protein belongs to the peptidase S10 family.

It is found in the secreted. In Arabidopsis thaliana (Mouse-ear cress), this protein is Putative serine carboxypeptidase-like 54 (SCPL54).